We begin with the raw amino-acid sequence, 138 residues long: Small ribosomal subunit protein uS11c (138 aa).

The disordered stretch occupies residues 1–23 (MAKPIQRIGSRRNGPIGSRKNGR).

The protein belongs to the universal ribosomal protein uS11 family. Part of the 30S ribosomal subunit.

The protein localises to the plastid. Its subcellular location is the chloroplast. This chain is Small ribosomal subunit protein uS11c, found in Platanus occidentalis (Sycamore).